Reading from the N-terminus, the 485-residue chain is Probable coniferyl aldehyde dehydrogenase (485 aa).

Residues E226 and C260 contribute to the active site.

The protein belongs to the aldehyde dehydrogenase family.

It carries out the reaction (E)-coniferaldehyde + NADP(+) + H2O = (E)-ferulate + NADPH + 2 H(+). It catalyses the reaction (E)-coniferaldehyde + NAD(+) + H2O = (E)-ferulate + NADH + 2 H(+). This is Probable coniferyl aldehyde dehydrogenase (calB) from Caulobacter vibrioides (strain ATCC 19089 / CIP 103742 / CB 15) (Caulobacter crescentus).